We begin with the raw amino-acid sequence, 1013 residues long: Sodium/potassium-transporting ATPase subunit alpha-3 (1013 aa).

Residues 1 to 24 are disordered; that stretch reads MGDKKDDKDSPKKNKGKERRDLDD. The Cytoplasmic portion of the chain corresponds to 1–77; sequence MGDKKDDKDS…NALTPPPTTP (77 aa). Ser37 and Ser56 each carry phosphoserine. An interaction with phosphoinositide-3 kinase region spans residues 72–74; it reads PPP. A helical membrane pass occupies residues 78–98; it reads EWVKFCRQLFGGFSILLWIGA. The Extracellular segment spans residues 99–121; that stretch reads ILCFLAYGIQAGTEDDPSGDNLY. The chain crosses the membrane as a helical span at residues 122 to 142; that stretch reads LGIVLAAVVIITGCFSYYQEA. Over 143 to 278 the chain is Cytoplasmic; the sequence is KSSKIMESFK…VGKTPIAIEI (136 aa). Phosphoserine is present on residues Ser218 and Ser265. Residues 279 to 298 traverse the membrane as a helical segment; that stretch reads EHFIQLITGVAVFLGVSFFI. Residues 299 to 310 lie on the Extracellular side of the membrane; that stretch reads LSLILGYTWLEA. The chain crosses the membrane as a helical span at residues 311–328; sequence VIFLIGIIVANVPEGLLA. At 329-762 the chain is on the cytoplasmic side; the sequence is TVTVCLTLTA…EEGRLIFDNL (434 aa). Asp366 serves as the catalytic 4-aspartylphosphate intermediate. A Phosphoserine modification is found at Ser442. A Phosphotyrosine modification is found at Tyr548. Residues Asp707 and Asp711 each contribute to the Mg(2+) site. Residues 763–782 form a helical membrane-spanning segment; the sequence is KKSIAYTLTSNIPEITPFLL. The Extracellular segment spans residues 783-792; the sequence is FIMANIPLPL. A helical membrane pass occupies residues 793 to 813; sequence GTITILCIDLGTDMVPAISLA. The Cytoplasmic segment spans residues 814-833; the sequence is YEAAESDIMKRQPRNPRTDK. A helical transmembrane segment spans residues 834–856; the sequence is LVNERLISMAYGQIGMIQALGGF. The Extracellular portion of the chain corresponds to 857-908; that stretch reads FSYFVILAENGFLPGNLVGIRLNWDDRTVNDLEDSYGQQWTYEQRKVVEFTC. A helical transmembrane segment spans residues 909-928; sequence HTAFFVSIVVVQWADLIICK. The Cytoplasmic segment spans residues 929-941; sequence TRRNSVFQQGMKN. Ser933 is modified (phosphoserine; by PKA). Residues 942-960 form a helical membrane-spanning segment; the sequence is KILIFGLFEETALAAFLSY. The Extracellular portion of the chain corresponds to 961–975; the sequence is CPGMDVALRMYPLKP. A helical membrane pass occupies residues 976-996; the sequence is SWWFCAFPYSFLIFVYDEIRK. Topologically, residues 997–1013 are cytoplasmic; sequence LILRRNPGGWVEKETYY.

It belongs to the cation transport ATPase (P-type) (TC 3.A.3) family. Type IIC subfamily. The sodium/potassium-transporting ATPase is composed of a catalytic alpha subunit, an auxiliary non-catalytic beta subunit and an additional regulatory subunit. Interacts with regulatory subunit FXYD1.

It is found in the cell membrane. It catalyses the reaction K(+)(out) + Na(+)(in) + ATP + H2O = K(+)(in) + Na(+)(out) + ADP + phosphate + H(+). In terms of biological role, this is the catalytic component of the active enzyme, which catalyzes the hydrolysis of ATP coupled with the exchange of sodium and potassium ions across the plasma membrane. This action creates the electrochemical gradient of sodium and potassium ions, providing the energy for active transport of various nutrients. This is Sodium/potassium-transporting ATPase subunit alpha-3 (ATP1A3) from Homo sapiens (Human).